The sequence spans 410 residues: Segmentation protein fushi tarazu (410 aa).

Disordered stretches follow at residues 71 to 93 (TQTVPPVQPTTPPPKATKRKAED), 138 to 157 (PAVSTKVTASPAPSYDQEYV), and 175 to 221 (SPQS…SAVS). The span at 76-85 (PVQPTTPPPK) shows a compositional bias: pro residues. Residues 190–199 (TPPPTTPTSL) are compositionally biased toward pro residues. The homeobox DNA-binding region spans 254 to 313 (SKRTRQTYTRYQTLELEKEFHFNRYITRRRRIDIANALSLSERQIKIWFQNRRMKSKKDR).

This sequence belongs to the Antp homeobox family. In terms of processing, phosphorylated at as many as 16 sites. As to expression, expressed early in development in a striped pattern at the blastoderm stage. Later expressed in a specific subset of neuronal precursor cells, neurons and glia in the developing CNS. Between 5 and 6 hours of development, found in the midline precursor-2 cells in a segmentally repeating pattern. Expression in many other neuronal precursors follows and reaches a second peak of abundance at 9 hours of development. Expressed in the hindgut between 11-15 hours of development.

It localises to the nucleus. May play a role in determining neuronal identity, may be directly involved in specifying identity of individual neurons. Required during embryogenesis for the process of body segmentation. Homeotic protein, required in alternating segment primordia, it specifies the correct number of segments. This is Segmentation protein fushi tarazu (ftz) from Drosophila melanogaster (Fruit fly).